The chain runs to 423 residues: MKVPPVLLLFLLSSVRATEQPQVVTEHPSMEAALTGPNASSHFWANYTFSDWQNFVGRRRYGAESQNPTVKALLIVAYSFTIVFSLFGNVLVCHVIFKNQRMHSATSLFIVNLAVADIMITLLNTPFTLVRFVNSTWVFGKGMCHVSRFAQYCSLHVSALTLTAIAVDRHQVIMHPLKPRISITKGVIYIAVIWVMATFFSLPHAICQKLFTFKYSEDIVRSLCLPDFPEPADLFWKYLDLATFILLYLLPLFIISVAYARVAKKLWLCNTIGDVTTEQYLALRRKKKTTVKMLVLVVVLFALCWFPLNCYVLLLSSKAIHTNNALYFAFHWFAMSSTCYNPFIYCWLNENFRVELKALLSMCQRPPKPQEDRLPSPVPSFRVAWTEKSHGRRAPLPNHHLPSSQIQSGKTDLSSVEPVVAMS.

Positions 1-17 are cleaved as a signal peptide; it reads MKVPPVLLLFLLSSVRA. At 18–71 the chain is on the extracellular side; it reads TEQPQVVTEHPSMEAALTGPNASSHFWANYTFSDWQNFVGRRRYGAESQNPTVK. N-linked (GlcNAc...) asparagine glycans are attached at residues asparagine 38 and asparagine 46. The helical transmembrane segment at 72–92 threads the bilayer; sequence ALLIVAYSFTIVFSLFGNVLV. Over 93 to 107 the chain is Cytoplasmic; it reads CHVIFKNQRMHSATS. A helical membrane pass occupies residues 108 to 129; it reads LFIVNLAVADIMITLLNTPFTL. At 130-145 the chain is on the extracellular side; that stretch reads VRFVNSTWVFGKGMCH. An N-linked (GlcNAc...) asparagine glycan is attached at asparagine 134. The cysteines at positions 144 and 224 are disulfide-linked. A helical transmembrane segment spans residues 146-167; the sequence is VSRFAQYCSLHVSALTLTAIAV. The Cytoplasmic portion of the chain corresponds to 168 to 186; sequence DRHQVIMHPLKPRISITKG. Residues 187 to 208 traverse the membrane as a helical segment; sequence VIYIAVIWVMATFFSLPHAICQ. Over 209 to 238 the chain is Extracellular; sequence KLFTFKYSEDIVRSLCLPDFPEPADLFWKY. Residues 239–260 form a helical membrane-spanning segment; it reads LDLATFILLYLLPLFIISVAYA. Over 261–293 the chain is Cytoplasmic; the sequence is RVAKKLWLCNTIGDVTTEQYLALRRKKKTTVKM. Residues 294-315 traverse the membrane as a helical segment; that stretch reads LVLVVVLFALCWFPLNCYVLLL. Over 316–327 the chain is Extracellular; it reads SSKAIHTNNALY. Residues 328–348 traverse the membrane as a helical segment; the sequence is FAFHWFAMSSTCYNPFIYCWL. Topologically, residues 349-423 are cytoplasmic; sequence NENFRVELKA…SSVEPVVAMS (75 aa). The interval 389 to 423 is disordered; it reads SHGRRAPLPNHHLPSSQIQSGKTDLSSVEPVVAMS. Polar residues predominate over residues 401–414; sequence LPSSQIQSGKTDLS.

The protein belongs to the G-protein coupled receptor 1 family. Predominantly expressed in the brain, with moderate expression in the hypothalamus. Expressed in the thymus.

The protein localises to the cell membrane. G-protein coupled receptor for PEN, a neuropeptide produced from the precursor protein, proSAAS (encoded by PCSK1N). Acts through a G(i)- and G(q)-alpha-alpha-mediated pathway in response to PEN. Plays a role in food intake and body weight regulation. May contribute to the regulation of anxiety-related behaviors. The sequence is that of G-protein coupled receptor 83 from Mus musculus (Mouse).